The chain runs to 128 residues: Large ribosomal subunit protein bL17 (128 aa).

Belongs to the bacterial ribosomal protein bL17 family. In terms of assembly, part of the 50S ribosomal subunit. Contacts protein L32.

The protein is Large ribosomal subunit protein bL17 of Pseudomonas entomophila (strain L48).